Here is a 149-residue protein sequence, read N- to C-terminus: Acyl carrier protein 1, chloroplastic (149 aa).

Residues 1–59 constitute a chloroplast transit peptide; sequence MAHCLAAVSSFSPSAVRRRLSSQVANVVSSRSSVSFHSRQMSFVSISSRPSSLRFKICC. The Carrier domain occupies 69–144; the sequence is KETVDKVCMI…DAANLIEKLV (76 aa). At Ser104 the chain carries O-(pantetheine 4'-phosphoryl)serine.

The protein belongs to the acyl carrier protein (ACP) family. Post-translationally, 4'-phosphopantetheine is transferred from CoA to a specific serine of apo-ACP by acpS. This modification is essential for activity because fatty acids are bound in thioester linkage to the sulfhydryl of the prosthetic group.

The protein resides in the plastid. The protein localises to the chloroplast. Its pathway is lipid metabolism; fatty acid biosynthesis. Carrier of the growing fatty acid chain in fatty acid biosynthesis. This is Acyl carrier protein 1, chloroplastic (ACL1.1) from Hordeum vulgare (Barley).